Here is a 260-residue protein sequence, read N- to C-terminus: Endomucin (260 aa).

Positions 1–18 (MELLQVTILFLLPSICSS) are cleaved as a signal peptide. N-linked (GlcNAc...) asparagine glycans are attached at residues N19, N28, N97, and N103. The Extracellular segment spans residues 19 to 189 (NSTGVLEAAN…TSATSRSYSS (171 aa)). 2 stretches are compositionally biased toward polar residues: residues 119-133 (QSSK…SIKT) and 145-170 (ASPS…SQVI). Residues 119–182 (QSSKPKTETQ…EGGKNASTSA (64 aa)) are disordered. Residues N163 and N177 are each glycosylated (N-linked (GlcNAc...) asparagine). The helical transmembrane segment at 190 to 210 (IILPVVIALIVITLSVFVLVG) threads the bilayer. Residues 211–260 (LYRMCWKADPGTPENGNDQPQSDKESVKLLTVKTISHESGEHSAQGKTKN) lie on the Cytoplasmic side of the membrane. S236 carries the post-translational modification Phosphoserine.

Post-translationally, highly O-glycosylated. Sialic acid-rich glycoprotein.

The protein resides in the membrane. Endothelial sialomucin, also called endomucin or mucin-like sialoglycoprotein, which interferes with the assembly of focal adhesion complexes and inhibits interaction between cells and the extracellular matrix. The sequence is that of Endomucin (EMCN) from Pongo abelii (Sumatran orangutan).